The primary structure comprises 417 residues: 3-oxoacyl-[acyl-carrier-protein] synthase 2 (417 aa).

One can recognise a Ketosynthase family 3 (KS3) domain in the interval 10 to 416 (FPYVVVTGIA…GHNVAIAFGR (407 aa)). Catalysis depends on for beta-ketoacyl synthase activity residues Cys170, His311, and His346.

This sequence belongs to the thiolase-like superfamily. Beta-ketoacyl-ACP synthases family.

The protein resides in the cytoplasm. It catalyses the reaction an ultra-long-chain di-unsaturated fatty acyl-[ACP] + malonyl-[ACP] + H(+) = a 3-oxo-ultra-long-chain di-unsaturated fatty acyl-[ACP] + holo-[ACP] + CO2. It participates in lipid metabolism; mycolic acid biosynthesis. In terms of biological role, part of the mycobacterial fatty acid elongation system FAS-II, which is involved in mycolic acid biosynthesis. Catalyzes the elongation of long chain acyl-ACP substrates by the addition of two carbons from malonyl-ACP to an acyl acceptor. Involved in extension of the mycolate chains to full lengths and produces longer chain multiunsaturated hydrocarbons averaging 54 carbons in length. This chain is 3-oxoacyl-[acyl-carrier-protein] synthase 2 (kasB), found in Mycobacterium bovis (strain ATCC BAA-935 / AF2122/97).